Here is a 258-residue protein sequence, read N- to C-terminus: Methanol--corrinoid protein (258 aa).

The region spanning 30–124 (AEELYPKDEL…NSGATPKTKG (95 aa)) is the B12-binding N-terminal domain. One can recognise a B12-binding domain in the interval 123–248 (KGTVVCHVAE…DAIIAGTTDV (126 aa)). H136 is a binding site for methylcob(III)alamin.

The protein belongs to the methylamine corrinoid protein family. In terms of assembly, heterotetramer, composed of 2 MtaB and 2 MtaC subunits.

Functionally, harbors a corrinoid prosthetic group and acts as a methyl group carrier in methanogenesis in the methanol pathway. The methyl group of methanol is first transferred to the corrinoid prosthetic group of MtaC in the cob(I)amide oxidation state. This reaction is mediated by MtaB. The methyl group from MtaC is then transferred to coenzyme M by MtaA. The chain is Methanol--corrinoid protein (mtaC) from Methanosarcina barkeri (strain Fusaro / DSM 804).